The following is a 240-amino-acid chain: Probable transcriptional regulatory protein Hac_0344 (240 aa).

It belongs to the TACO1 family.

The protein localises to the cytoplasm. The protein is Probable transcriptional regulatory protein Hac_0344 of Helicobacter acinonychis (strain Sheeba).